The following is a 359-amino-acid chain: CMP-N-acetylneuraminate-poly-alpha-2,8-sialyltransferase (359 aa).

At 1 to 7 (MRSIRKR) the chain is on the cytoplasmic side. The chain crosses the membrane as a helical; Signal-anchor for type II membrane protein span at residues 8–20 (WTICTISLLLIFY). The Lumenal segment spans residues 21 to 359 (KTKEIARTEE…KLTTGKCMKQ (339 aa)). N-linked (GlcNAc...) asparagine glycosylation is found at asparagine 50, asparagine 74, and asparagine 119. 2 cysteine pairs are disulfide-bonded: cysteine 142-cysteine 292 and cysteine 156-cysteine 356. Asparagine 147 and asparagine 170 together coordinate CMP-N-acetyl-beta-neuraminate. N-linked (GlcNAc...) asparagine glycosylation is found at asparagine 204 and asparagine 219. Residues serine 279, threonine 280, glycine 281, and tryptophan 301 each contribute to the CMP-N-acetyl-beta-neuraminate site. Histidine 331 functions as the Proton donor/acceptor in the catalytic mechanism.

The protein belongs to the glycosyltransferase 29 family. In terms of processing, autopolysialylated.

The protein resides in the golgi apparatus membrane. It is found in the secreted. It catalyses the reaction [N-acetyl-alpha-D-neuraminosyl-(2-&gt;8)](n) + CMP-N-acetyl-beta-neuraminate = [N-acetyl-alpha-D-neuraminosyl-(2-&gt;8)](n+1) + CMP + H(+). It functions in the pathway protein modification; protein glycosylation. Functionally, catalyzes the transfer of a sialic acid from a CMP-linked sialic acid donor onto a terminal alpha-2,3-, alpha-2,6-, or alpha-2,8-linked sialic acid of an N-linked glycan protein acceptor through alpha-2,8-linkages. Therefore, participates in polysialic acid synthesis on various sialylated N-acetyllactosaminyl oligosaccharides, including NCAM1 N-glycans, FETUB N-glycans and AHSG. It is noteworthy that alpha-2,3-linked sialic acid is apparently a better acceptor than alpha-2,6-linked sialic acid. The chain is CMP-N-acetylneuraminate-poly-alpha-2,8-sialyltransferase from Cricetulus griseus (Chinese hamster).